Consider the following 1372-residue polypeptide: DNA-directed RNA polymerase subunit beta (1372 aa).

The protein belongs to the RNA polymerase beta chain family. In terms of assembly, the RNAP catalytic core consists of 2 alpha, 1 beta, 1 beta' and 1 omega subunit. When a sigma factor is associated with the core the holoenzyme is formed, which can initiate transcription.

The enzyme catalyses RNA(n) + a ribonucleoside 5'-triphosphate = RNA(n+1) + diphosphate. DNA-dependent RNA polymerase catalyzes the transcription of DNA into RNA using the four ribonucleoside triphosphates as substrates. In Nitratidesulfovibrio vulgaris (strain DP4) (Desulfovibrio vulgaris), this protein is DNA-directed RNA polymerase subunit beta.